Consider the following 626-residue polypeptide: UvrABC system protein C (626 aa).

One can recognise a GIY-YIG domain in the interval 25–104; the sequence is TSPGVYRFSN…IKELKPRYNV (80 aa). The 36-residue stretch at 218 to 253 folds into the UVR domain; sequence SALLRDLSAEMQKKAKELKFEEAAALKAQIEGLKRY.

The protein belongs to the UvrC family. In terms of assembly, interacts with UvrB in an incision complex.

Its subcellular location is the cytoplasm. Its function is as follows. The UvrABC repair system catalyzes the recognition and processing of DNA lesions. UvrC both incises the 5' and 3' sides of the lesion. The N-terminal half is responsible for the 3' incision and the C-terminal half is responsible for the 5' incision. The chain is UvrABC system protein C from Chlorobaculum tepidum (strain ATCC 49652 / DSM 12025 / NBRC 103806 / TLS) (Chlorobium tepidum).